The sequence spans 417 residues: NADH-quinone oxidoreductase subunit D (417 aa).

The protein belongs to the complex I 49 kDa subunit family. NDH-1 is composed of 14 different subunits. Subunits NuoB, C, D, E, F, and G constitute the peripheral sector of the complex.

It localises to the cell inner membrane. It catalyses the reaction a quinone + NADH + 5 H(+)(in) = a quinol + NAD(+) + 4 H(+)(out). NDH-1 shuttles electrons from NADH, via FMN and iron-sulfur (Fe-S) centers, to quinones in the respiratory chain. The immediate electron acceptor for the enzyme in this species is believed to be ubiquinone. Couples the redox reaction to proton translocation (for every two electrons transferred, four hydrogen ions are translocated across the cytoplasmic membrane), and thus conserves the redox energy in a proton gradient. This is NADH-quinone oxidoreductase subunit D from Burkholderia multivorans (strain ATCC 17616 / 249).